The sequence spans 152 residues: MSQLLDKAKNYVAEKVTNMPKPEASVTDVDFKRVSRDSVEYLAKVSVSNPYSTPIPICEIKYSLKSAGKEIASGTIPDPGSLKASDTTMLDVPVKVPHSILLSLAKDIGADWDIDYQLDLGLVIDLPVIGNFTIPLSQKGEIKLPTLSDMFA.

The protein belongs to the LEA type 2 family.

The polypeptide is Desiccation protectant protein Lea14 homolog (Glycine max (Soybean)).